The primary structure comprises 159 residues: 2-C-methyl-D-erythritol 2,4-cyclodiphosphate synthase (159 aa).

Aspartate 10 and histidine 12 together coordinate a divalent metal cation. Residues 10–12 (DVH) and 36–37 (HS) each bind 4-CDP-2-C-methyl-D-erythritol 2-phosphate. An a divalent metal cation-binding site is contributed by histidine 44. Residues 58 to 60 (DIG), 63 to 67 (FANTD), 134 to 137 (TTNE), and arginine 144 contribute to the 4-CDP-2-C-methyl-D-erythritol 2-phosphate site.

It belongs to the IspF family. Homotrimer. It depends on a divalent metal cation as a cofactor.

The catalysed reaction is 4-CDP-2-C-methyl-D-erythritol 2-phosphate = 2-C-methyl-D-erythritol 2,4-cyclic diphosphate + CMP. It functions in the pathway isoprenoid biosynthesis; isopentenyl diphosphate biosynthesis via DXP pathway; isopentenyl diphosphate from 1-deoxy-D-xylulose 5-phosphate: step 4/6. In terms of biological role, involved in the biosynthesis of isopentenyl diphosphate (IPP) and dimethylallyl diphosphate (DMAPP), two major building blocks of isoprenoid compounds. Catalyzes the conversion of 4-diphosphocytidyl-2-C-methyl-D-erythritol 2-phosphate (CDP-ME2P) to 2-C-methyl-D-erythritol 2,4-cyclodiphosphate (ME-CPP) with a corresponding release of cytidine 5-monophosphate (CMP). The sequence is that of 2-C-methyl-D-erythritol 2,4-cyclodiphosphate synthase from Cytophaga hutchinsonii (strain ATCC 33406 / DSM 1761 / CIP 103989 / NBRC 15051 / NCIMB 9469 / D465).